Here is a 406-residue protein sequence, read N- to C-terminus: uncharacterized protein (406 aa).

Gly-2 is lipidated: N-myristoyl glycine; by host. A disordered region spans residues 291 to 406 (QLESTTEVKP…FQYNKPTYDI (116 aa)). Residues 296–310 (TEVKPESTTEVKPES) are compositionally biased toward basic and acidic residues. Over residues 311-323 (TSEVQPESTTEFQ) the composition is skewed to polar residues. Composition is skewed to low complexity over residues 324–333 (PESTTVVEPE), 341–351 (ESTTEFQPEST), and 359–369 (TTEPQVESTTE). Residues 370–406 (FQPESSTEPQVESTVEVQAESMNESSYFQYNKPTYDI) show a composition bias toward polar residues.

This is an uncharacterized protein from Acanthamoeba polyphaga (Amoeba).